A 129-amino-acid polypeptide reads, in one-letter code: Phosphoribosyl-AMP cyclohydrolase (129 aa).

Asp-86 provides a ligand contact to Mg(2+). Cys-87 contacts Zn(2+). Mg(2+)-binding residues include Asp-88 and Asp-90. Cys-104 and Cys-111 together coordinate Zn(2+).

It belongs to the PRA-CH family. Homodimer. The cofactor is Mg(2+). Zn(2+) serves as cofactor.

Its subcellular location is the cytoplasm. The catalysed reaction is 1-(5-phospho-beta-D-ribosyl)-5'-AMP + H2O = 1-(5-phospho-beta-D-ribosyl)-5-[(5-phospho-beta-D-ribosylamino)methylideneamino]imidazole-4-carboxamide. Its pathway is amino-acid biosynthesis; L-histidine biosynthesis; L-histidine from 5-phospho-alpha-D-ribose 1-diphosphate: step 3/9. In terms of biological role, catalyzes the hydrolysis of the adenine ring of phosphoribosyl-AMP. The protein is Phosphoribosyl-AMP cyclohydrolase of Ignicoccus hospitalis (strain KIN4/I / DSM 18386 / JCM 14125).